The following is a 130-amino-acid chain: MAPKAEKKPASKAPAEKKPAAKKTASATGTKKRSKTRKETYSSYIYKVLKQTHPDTGISQKAMSIMNSFVNDIFERIAGEASKLAAYNKKSTISAREIQTAVRLILPGELAKHAVSEGTRAVTKYSSAAN.

The span at 1–19 (MAPKAEKKPASKAPAEKKP) shows a compositional bias: basic and acidic residues. Residues 1–39 (MAPKAEKKPASKAPAEKKPAAKKTASATGTKKRSKTRKE) form a disordered region. N6-acetyllysine; alternate occurs at positions 7 and 8. Glycyl lysine isopeptide (Lys-Gly) (interchain with G-Cter in SUMO); alternate cross-links involve residues Lys7 and Lys8. Ser11 carries the phosphoserine modification. Position 12 is an N6-acetyllysine (Lys12). At Lys17 the chain carries N6-acetyllysine; alternate. Lys17 participates in a covalent cross-link: Glycyl lysine isopeptide (Lys-Gly) (interchain with G-Cter in SUMO); alternate. Lys18 participates in a covalent cross-link: Glycyl lysine isopeptide (Lys-Gly) (interchain with G-Cter in SUMO). A Glycyl lysine isopeptide (Lys-Gly) (interchain with G-Cter in ubiquitin) cross-link involves residue Lys124.

This sequence belongs to the histone H2B family. The nucleosome is a histone octamer containing two molecules each of H2A, H2B, H3 and H4 assembled in one H3-H4 heterotetramer and two H2A-H2B heterodimers. The octamer wraps approximately 147 bp of DNA. Post-translationally, monoubiquitinated by the UBC2-BRE1 complex to form H2BK123ub1. H2BK123ub1 gives a specific tag for epigenetic transcriptional activation and is also prerequisite for H3K4me and H3K79me formation. H2BK123ub1 also modulates the formation of double-strand breaks during meiosis and is a prerequisite for DNA-damage checkpoint activation. In terms of processing, phosphorylated by STE20 to form H2BS10ph during progression through meiotic prophase. May be correlated with chromosome condensation. Acetylated by GCN5 to form H2BK11ac and H2BK16ac. H2BK16ac can also be formed by ESA1. Acetylation of N-terminal lysines and particularly formation of H2BK11acK16ac has a positive effect on transcription. Post-translationally, sumoylation to form H2BK6su or H2BK7su, and probably also H2BK16su or H2BK17su, occurs preferentially near the telomeres and represses gene transcription.

It is found in the nucleus. Its subcellular location is the chromosome. In terms of biological role, core component of nucleosome. Nucleosomes wrap and compact DNA into chromatin, limiting DNA accessibility to the cellular machineries which require DNA as a template. Histones thereby play a central role in transcription regulation, DNA repair, DNA replication and chromosomal stability. DNA accessibility is regulated via a complex set of post-translational modifications of histones, also called histone code, and nucleosome remodeling. This Debaryomyces hansenii (strain ATCC 36239 / CBS 767 / BCRC 21394 / JCM 1990 / NBRC 0083 / IGC 2968) (Yeast) protein is Histone H2B.1 (HTB1).